The sequence spans 170 residues: NAD(P)H-quinone oxidoreductase subunit I, chloroplastic (170 aa).

4Fe-4S ferredoxin-type domains follow at residues 55-84 (GRIH…VDWK) and 95-124 (LNYS…MTEE). Positions 64, 67, 70, 74, 104, 107, 110, and 114 each coordinate [4Fe-4S] cluster.

This sequence belongs to the complex I 23 kDa subunit family. As to quaternary structure, NDH is composed of at least 16 different subunits, 5 of which are encoded in the nucleus. [4Fe-4S] cluster is required as a cofactor.

The protein localises to the plastid. Its subcellular location is the chloroplast thylakoid membrane. The enzyme catalyses a plastoquinone + NADH + (n+1) H(+)(in) = a plastoquinol + NAD(+) + n H(+)(out). It catalyses the reaction a plastoquinone + NADPH + (n+1) H(+)(in) = a plastoquinol + NADP(+) + n H(+)(out). NDH shuttles electrons from NAD(P)H:plastoquinone, via FMN and iron-sulfur (Fe-S) centers, to quinones in the photosynthetic chain and possibly in a chloroplast respiratory chain. The immediate electron acceptor for the enzyme in this species is believed to be plastoquinone. Couples the redox reaction to proton translocation, and thus conserves the redox energy in a proton gradient. The protein is NAD(P)H-quinone oxidoreductase subunit I, chloroplastic of Spinacia oleracea (Spinach).